A 466-amino-acid chain; its full sequence is UDP-N-acetylmuramoylalanine--D-glutamate ligase (466 aa).

G121 to T127 provides a ligand contact to ATP.

The protein belongs to the MurCDEF family.

Its subcellular location is the cytoplasm. The catalysed reaction is UDP-N-acetyl-alpha-D-muramoyl-L-alanine + D-glutamate + ATP = UDP-N-acetyl-alpha-D-muramoyl-L-alanyl-D-glutamate + ADP + phosphate + H(+). It functions in the pathway cell wall biogenesis; peptidoglycan biosynthesis. Functionally, cell wall formation. Catalyzes the addition of glutamate to the nucleotide precursor UDP-N-acetylmuramoyl-L-alanine (UMA). In Nitrobacter hamburgensis (strain DSM 10229 / NCIMB 13809 / X14), this protein is UDP-N-acetylmuramoylalanine--D-glutamate ligase.